Here is a 390-residue protein sequence, read N- to C-terminus: L-rhamnonate dehydratase (390 aa).

2 residues coordinate substrate: His19 and Arg45. The Mg(2+) site is built by Asp211, Glu237, and Glu265. Residue His315 is the Proton acceptor of the active site. A substrate-binding site is contributed by Glu335.

This sequence belongs to the mandelate racemase/muconate lactonizing enzyme family. RhamD subfamily. The cofactor is Mg(2+).

It carries out the reaction L-rhamnonate = 2-dehydro-3-deoxy-L-rhamnonate + H2O. Catalyzes the dehydration of L-rhamnonate to 2-keto-3-deoxy-L-rhamnonate (KDR). In Saccharopolyspora erythraea (strain ATCC 11635 / DSM 40517 / JCM 4748 / NBRC 13426 / NCIMB 8594 / NRRL 2338), this protein is L-rhamnonate dehydratase.